Here is an 821-residue protein sequence, read N- to C-terminus: Maternal DNA replication licensing factor mcm6 (821 aa).

A C4-type zinc finger spans residues 159–186 (CMDCQSVVKDVEQQFRYTQPTICKNPVC). The MCM domain occupies 347–554 (LYHNLCTSLF…TDYAIARRIV (208 aa)). Residue 397 to 404 (GDPSTSKS) coordinates ATP. Residues 529–532 (SRFD) carry the Arginine finger motif.

The protein belongs to the MCM family. Component of the mcm2-7 complex (RLF-M). The complex forms a toroidal hexameric ring with the proposed subunit order mcm2-mcm6-mcm4-mcm7-mcm3-mcm5. The heterodimer of mmcm3/mcm5 interacts with mcm4, mmcm6, mcm7 and weakly with mcm2. Component of the CMG helicase complex, composed of the mcm2-7 complex, the GINS complex and cdc45.

It localises to the nucleus. The protein resides in the chromosome. The enzyme catalyses ATP + H2O = ADP + phosphate + H(+). In terms of biological role, acts as a component of the mcm2-7 complex (mcm complex) which is the putative replicative helicase essential for 'once per cell cycle' DNA replication initiation and elongation in eukaryotic cells. The active ATPase sites in the mcm2-7 ring are formed through the interaction surfaces of two neighboring subunits such that a critical structure of a conserved arginine finger motif is provided in trans relative to the ATP-binding site of the Walker A box of the adjacent subunit. The six ATPase active sites, however, are likely to contribute differentially to the complex helicase activity. The existence of maternal and zygotic forms of mcm3 and mcm6 suggests that specific forms of mcm2-7 complexes may be used during different stages of development. This is Maternal DNA replication licensing factor mcm6 from Xenopus tropicalis (Western clawed frog).